A 64-amino-acid polypeptide reads, in one-letter code: DNA-binding protein 7a (64 aa).

An N6-methyllysine; partial mark is found at K5 and K7.

Belongs to the 7 kDa DNA-binding/endoribonuclease P2 family. Homodimer. Lys-5 and Lys-7 were found to be 60% monomethylated. In terms of processing, ADP-ribosylated by endogenous proteins in vitro.

Its function is as follows. Can constrain negative DNA supercoils. May be involved in maintaining the integrity of the genome at high temperature. Has RNA endonuclease activity with a narrow substrate specificity; the cleavage products are 3'-phosphooligonucleotides. The polypeptide is DNA-binding protein 7a (sso7a1) (Saccharolobus solfataricus (strain ATCC 35092 / DSM 1617 / JCM 11322 / P2) (Sulfolobus solfataricus)).